The sequence spans 243 residues: Precursor of CEP9 (243 aa).

Positions 1 to 26 (MKLLSITLTSIVISMVFYQTPITTEA) are cleaved as a signal peptide. A propeptide spanning residues 28-44 (SLRKTNDQDHFKAGFTD) is cleaved from the precursor. 3 disordered regions span residues 42 to 63 (FTDD…KKGN), 91 to 173 (KTGS…VKGF), and 189 to 243 (NGQD…EPKA). A Hydroxyproline; partial modification is found at Pro48. Pro51 is modified (hydroxyproline). Pro55 is subject to Hydroxyproline; partial. Residues 60–96 (KKGNVNVEGFQDDFKPTEGRKLLKTNVQDHFKTGSTD) constitute a propeptide that is removed on maturation. Hydroxyproline is present on residues Pro100, Pro103, and Pro107. Residues 112-148 (KKGNVNVESSEDDFKHKEGRKLQQTNGQNHFKTGSTD) constitute a propeptide that is removed on maturation. Residues 133 to 147 (LQQTNGQNHFKTGST) show a composition bias toward polar residues. Residues Pro152, Pro155, and Pro159 each carry the hydroxyproline modification. Residues 164-200 (KKGHANVKGFKDDFAPTEEIRLQKMNGQDHFKTGSTD) constitute a propeptide that is removed on maturation. Hydroxyproline is present on residues Pro204, Pro207, and Pro211. Residues 216 to 219 (KKGD) constitute a propeptide that is removed on maturation. A hydroxyproline mark is found at Pro223, Pro226, and Pro230. Residues 235-243 (AVKNDEPKA) constitute a propeptide that is removed on maturation.

It belongs to the C-terminally encoded plant signaling peptide (CEP) family. In terms of assembly, interacts with CEP receptors (e.g. CEPR1 and CEPR2). Post-translationally, hydroxylated peptide is more active than non-hydroxylated peptide. In terms of processing, the mature small signaling peptide is generated by proteolytic processing of the longer precursor. In terms of tissue distribution, expressed in lateral root primordia and in lateral roots excluding the meristem region. Also present in the aerial tissues, such as leaf petioles and the shoot apex region.

It is found in the secreted. The protein localises to the extracellular space. It localises to the apoplast. Functionally, extracellular signaling peptide that represses primary root growth rate and significantly inhibits lateral root formation. Modulates leaf morphology. Regulates systemic nitrogen (N)-demand signaling. Mediates up-regulation of genes involved in N uptake and assimilation pathways. The sequence is that of Precursor of CEP9 from Arabidopsis thaliana (Mouse-ear cress).